Consider the following 501-residue polypeptide: Flagellin (501 aa).

This sequence belongs to the bacterial flagellin family.

Its subcellular location is the secreted. It localises to the bacterial flagellum. Its function is as follows. Flagellin is the subunit protein which polymerizes to form the filaments of bacterial flagella. The sequence is that of Flagellin (flaA) from Aquifex pyrophilus.